Consider the following 310-residue polypeptide: Aspartate carbamoyltransferase catalytic subunit (310 aa).

Arg-58 and Thr-59 together coordinate carbamoyl phosphate. Lys-86 is a binding site for L-aspartate. 3 residues coordinate carbamoyl phosphate: Arg-108, His-137, and Gln-140. Residues Arg-170 and Arg-225 each contribute to the L-aspartate site. The carbamoyl phosphate site is built by Gly-264 and Pro-265.

Belongs to the aspartate/ornithine carbamoyltransferase superfamily. ATCase family. As to quaternary structure, heterododecamer (2C3:3R2) of six catalytic PyrB chains organized as two trimers (C3), and six regulatory PyrI chains organized as three dimers (R2).

It carries out the reaction carbamoyl phosphate + L-aspartate = N-carbamoyl-L-aspartate + phosphate + H(+). The protein operates within pyrimidine metabolism; UMP biosynthesis via de novo pathway; (S)-dihydroorotate from bicarbonate: step 2/3. Functionally, catalyzes the condensation of carbamoyl phosphate and aspartate to form carbamoyl aspartate and inorganic phosphate, the committed step in the de novo pyrimidine nucleotide biosynthesis pathway. This chain is Aspartate carbamoyltransferase catalytic subunit, found in Coxiella burnetii (strain CbuG_Q212) (Coxiella burnetii (strain Q212)).